Reading from the N-terminus, the 233-residue chain is MKTCITKGIVTVSLTAILLSCSSAWAAGKGGIGLAATRLVYSEGEEQISLGVRNTSPDVPYLIQSWVMTPDNKKSADFIITPPLFVLNPANENLLRIMYIGAPLAKDRETLFFTSVRAVPSTTKRKEGNTLKIATQSVIKLFWRPKGLAYPLGEAPAKLRCTSSADMVTVSNPTPYFITLTDLKIGGKVVKNQMISPFDKYQFSLPKGAKNSSVTYRTINDYGAETPQLNCKS.

An N-terminal signal peptide occupies residues 1–26; it reads MKTCITKGIVTVSLTAILLSCSSAWA.

The protein belongs to the periplasmic pilus chaperone family.

It is found in the periplasm. Part of the elfADCG-ycbUVF fimbrial operon, which promotes adhesion of bacteria to different abiotic surfaces. Could be required for the biogenesis of the ElfA fimbriae. The sequence is that of Probable fimbrial chaperone protein ElfD (elfD) from Escherichia coli (strain K12).